Here is a 303-residue protein sequence, read N- to C-terminus: Methionyl-tRNA formyltransferase (303 aa).

108 to 111 (SDLP) lines the (6S)-5,6,7,8-tetrahydrofolate pocket.

It belongs to the Fmt family.

The catalysed reaction is L-methionyl-tRNA(fMet) + (6R)-10-formyltetrahydrofolate = N-formyl-L-methionyl-tRNA(fMet) + (6S)-5,6,7,8-tetrahydrofolate + H(+). Attaches a formyl group to the free amino group of methionyl-tRNA(fMet). The formyl group appears to play a dual role in the initiator identity of N-formylmethionyl-tRNA by promoting its recognition by IF2 and preventing the misappropriation of this tRNA by the elongation apparatus. This chain is Methionyl-tRNA formyltransferase, found in Rickettsia africae (strain ESF-5).